A 294-amino-acid polypeptide reads, in one-letter code: Lipoyl synthase (294 aa).

Cys-41, Cys-46, Cys-52, Cys-67, Cys-71, Cys-74, and Ser-281 together coordinate [4Fe-4S] cluster. One can recognise a Radical SAM core domain in the interval 53–270 (FNNGTATFMI…KLESLAMGFT (218 aa)).

It belongs to the radical SAM superfamily. Lipoyl synthase family. Requires [4Fe-4S] cluster as cofactor.

It localises to the cytoplasm. The enzyme catalyses [[Fe-S] cluster scaffold protein carrying a second [4Fe-4S](2+) cluster] + N(6)-octanoyl-L-lysyl-[protein] + 2 oxidized [2Fe-2S]-[ferredoxin] + 2 S-adenosyl-L-methionine + 4 H(+) = [[Fe-S] cluster scaffold protein] + N(6)-[(R)-dihydrolipoyl]-L-lysyl-[protein] + 4 Fe(3+) + 2 hydrogen sulfide + 2 5'-deoxyadenosine + 2 L-methionine + 2 reduced [2Fe-2S]-[ferredoxin]. It functions in the pathway protein modification; protein lipoylation via endogenous pathway; protein N(6)-(lipoyl)lysine from octanoyl-[acyl-carrier-protein]: step 2/2. Catalyzes the radical-mediated insertion of two sulfur atoms into the C-6 and C-8 positions of the octanoyl moiety bound to the lipoyl domains of lipoate-dependent enzymes, thereby converting the octanoylated domains into lipoylated derivatives. The sequence is that of Lipoyl synthase from Baumannia cicadellinicola subsp. Homalodisca coagulata.